Here is a 196-residue protein sequence, read N- to C-terminus: Large ribosomal subunit protein uL6 (196 aa).

It belongs to the universal ribosomal protein uL6 family. As to quaternary structure, part of the 50S ribosomal subunit.

Its function is as follows. This protein binds to the 23S rRNA, and is important in its secondary structure. It is located near the subunit interface in the base of the L7/L12 stalk, and near the tRNA binding site of the peptidyltransferase center. This is Large ribosomal subunit protein uL6 from Archaeoglobus fulgidus (strain ATCC 49558 / DSM 4304 / JCM 9628 / NBRC 100126 / VC-16).